The sequence spans 199 residues: CASP-like protein 1D2 (199 aa).

The tract at residues 1–27 is disordered; that stretch reads MASTENPDPETGKSEPIPASATPPPSS. An N-acetylalanine modification is found at A2. The Cytoplasmic portion of the chain corresponds to 2–36; the sequence is ASTENPDPETGKSEPIPASATPPPSSAASFLDCRK. Residues 37-57 form a helical membrane-spanning segment; the sequence is IDIITRVLLFSATLTALIVMV. At 58–85 the chain is on the extracellular side; that stretch reads TSDQTEMTQLPGVSSPAPVSAEFNDSPA. The helical transmembrane segment at 86–106 threads the bilayer; it reads FIYFVVALVVASFYALISTLV. Over 107–129 the chain is Cytoplasmic; it reads SISLLLKPEFTAQFSIYLASLDM. The helical transmembrane segment at 130 to 150 threads the bilayer; that stretch reads VMLGILASATGTAGGVAYIAL. Residues 151–171 are Extracellular-facing; it reads KGNEEVGWNKICNVYDKFCRY. Residues 172–192 traverse the membrane as a helical segment; that stretch reads IATSLALSLFASLLLLVLSIW. The Cytoplasmic segment spans residues 193 to 199; it reads SALSKRT.

This sequence belongs to the Casparian strip membrane proteins (CASP) family. As to quaternary structure, homodimer and heterodimers. Expressed in the root endodermis and flowers.

It is found in the cell membrane. This Arabidopsis thaliana (Mouse-ear cress) protein is CASP-like protein 1D2.